A 533-amino-acid chain; its full sequence is Beta-xylosidase (533 aa).

The active-site Proton acceptor is the Asp-14. Residue Glu-186 is the Proton donor of the active site.

The protein belongs to the glycosyl hydrolase 43 family. Homodimer.

It localises to the cell membrane. It catalyses the reaction Hydrolysis of (1-&gt;4)-beta-D-xylans, to remove successive D-xylose residues from the non-reducing termini.. This is Beta-xylosidase (xynB) from Bacillus subtilis (strain 168).